A 562-amino-acid polypeptide reads, in one-letter code: Arginine--tRNA ligase 1 (562 aa).

A 'HIGH' region motif is present at residues proline 122 to histidine 132.

The protein belongs to the class-I aminoacyl-tRNA synthetase family. In terms of assembly, monomer.

It localises to the cytoplasm. It carries out the reaction tRNA(Arg) + L-arginine + ATP = L-arginyl-tRNA(Arg) + AMP + diphosphate. The sequence is that of Arginine--tRNA ligase 1 from Bacillus cereus (strain ZK / E33L).